The primary structure comprises 393 residues: Formate-dependent phosphoribosylglycinamide formyltransferase (393 aa).

N(1)-(5-phospho-beta-D-ribosyl)glycinamide contacts are provided by residues Glu-22–Leu-23 and Glu-82. Residues Arg-114, Lys-155, Ser-160–Gln-165, Glu-195–Val-198, and Glu-203 contribute to the ATP site. The region spanning Arg-119–Leu-308 is the ATP-grasp domain. Mg(2+)-binding residues include Glu-267 and Glu-279. Residues Asp-286, Lys-356, and Arg-363–Arg-364 contribute to the N(1)-(5-phospho-beta-D-ribosyl)glycinamide site.

The protein belongs to the PurK/PurT family. As to quaternary structure, homodimer.

It carries out the reaction N(1)-(5-phospho-beta-D-ribosyl)glycinamide + formate + ATP = N(2)-formyl-N(1)-(5-phospho-beta-D-ribosyl)glycinamide + ADP + phosphate + H(+). It functions in the pathway purine metabolism; IMP biosynthesis via de novo pathway; N(2)-formyl-N(1)-(5-phospho-D-ribosyl)glycinamide from N(1)-(5-phospho-D-ribosyl)glycinamide (formate route): step 1/1. Functionally, involved in the de novo purine biosynthesis. Catalyzes the transfer of formate to 5-phospho-ribosyl-glycinamide (GAR), producing 5-phospho-ribosyl-N-formylglycinamide (FGAR). Formate is provided by PurU via hydrolysis of 10-formyl-tetrahydrofolate. In Mannheimia succiniciproducens (strain KCTC 0769BP / MBEL55E), this protein is Formate-dependent phosphoribosylglycinamide formyltransferase.